A 95-amino-acid chain; its full sequence is Small ribosomal subunit protein uS17 (95 aa).

This sequence belongs to the universal ribosomal protein uS17 family. Part of the 30S ribosomal subunit.

In terms of biological role, one of the primary rRNA binding proteins, it binds specifically to the 5'-end of 16S ribosomal RNA. This Streptomyces coelicolor (strain ATCC BAA-471 / A3(2) / M145) protein is Small ribosomal subunit protein uS17.